The primary structure comprises 76 residues: Omega-conotoxin MoVIA (76 aa).

A signal peptide spans 1–22 (MKLTCVVIVAVLFLTACQLITA). A propeptide spanning residues 23 to 45 (DDSRSTQRHRALRSTTKLSMSTR) is cleaved from the precursor. Cystine bridges form between C46–C61, C53–C64, and C60–C71. 2 positions are modified to hydroxyproline: P49 and P55.

This sequence belongs to the conotoxin O1 superfamily. Expressed by the venom duct.

It localises to the secreted. Functionally, omega-conotoxins act at presynaptic membranes, they bind and block voltage-gated calcium channels (Cav). This toxin potently blocks mammalian N-type calcium channels (Cav2.2/CACNA1B) (IC(50)=330 nM on human channels). It is 9-fold more potent in displacing radiolabeled omega-conotoxin GVIA from fish brain membranes than from human SH-SY5Y cells. Omega-conotoxins act at presynaptic membranes, they bind and block voltage-gated calcium channels (Cav). This toxin potently blocks mammalian N-type calcium channels (Cav2.2/CACNA1B) (IC(50)=600 nM on human channels). It is 60-fold more potent in displacing radiolabeled omega-conotoxin GVIA from fish brain membranes than from human SH-SY5Y cells. In vivo, when tested on rat neuropathic pain model, this toxin shows an analgesic activity. The polypeptide is Omega-conotoxin MoVIA (Conus moncuri (Sea snail)).